Consider the following 166-residue polypeptide: Cofilin-2 (166 aa).

Positions 4 to 153 constitute an ADF-H domain; the sequence is GVTVNDEVIK…KDRSTLGEKL (150 aa). S24 bears the Phosphoserine mark. The short motif at 30–34 is the Nuclear localization signal element; that stretch reads KKRKK.

Belongs to the actin-binding proteins ADF family. Post-translationally, the phosphorylation of Ser-24 may prevent recognition of the nuclear localization signal. Widely distributed in various tissues.

Its subcellular location is the nucleus matrix. The protein resides in the cytoplasm. It localises to the cytoskeleton. Its function is as follows. Controls reversibly actin polymerization and depolymerization in a pH-sensitive manner. It has the ability to bind G- and F-actin in a 1:1 ratio of cofilin to actin. It is the major component of intranuclear and cytoplasmic actin rods. The chain is Cofilin-2 (CFL2) from Gallus gallus (Chicken).